A 330-amino-acid chain; its full sequence is tRNA pseudouridine synthase B (330 aa).

Catalysis depends on D42, which acts as the Nucleophile.

It belongs to the pseudouridine synthase TruB family. Type 1 subfamily.

It carries out the reaction uridine(55) in tRNA = pseudouridine(55) in tRNA. Responsible for synthesis of pseudouridine from uracil-55 in the psi GC loop of transfer RNAs. The chain is tRNA pseudouridine synthase B from Lactococcus lactis subsp. cremoris (strain MG1363).